The primary structure comprises 348 residues: Dihydroorotase (348 aa).

Zn(2+) contacts are provided by His-17 and His-19. Substrate contacts are provided by residues His-19–Arg-21 and Asn-45. Zn(2+)-binding residues include Lys-103, His-140, and His-178. Residue Lys-103 is modified to N6-carboxylysine. His-140 lines the substrate pocket. Residue Leu-223 coordinates substrate. Zn(2+) is bound at residue Asp-251. Asp-251 is a catalytic residue. The substrate site is built by His-255 and Ala-267.

Belongs to the metallo-dependent hydrolases superfamily. DHOase family. Class II DHOase subfamily. As to quaternary structure, homodimer. The cofactor is Zn(2+).

It catalyses the reaction (S)-dihydroorotate + H2O = N-carbamoyl-L-aspartate + H(+). It functions in the pathway pyrimidine metabolism; UMP biosynthesis via de novo pathway; (S)-dihydroorotate from bicarbonate: step 3/3. In terms of biological role, catalyzes the reversible cyclization of carbamoyl aspartate to dihydroorotate. This is Dihydroorotase from Salmonella newport (strain SL254).